The sequence spans 370 residues: MLSKRLLNFESFEVMDILALAQKLESEGKKVIHLEIGEPDFNTPKPIVDEGIKSLKEGKTHYTDSRGILELREKISELYKDKYKADIIPDNIIITGGSSLGLFFALSSIIDDGDEVLIQNPCYPCYKNFIRFLGAKPVFCDFTVESLEEALSDKTKAIIINSPSNPLGEVIDREIYEFAYENIPYIISDEIYNGLVYEGKCYSAIEFDENLEKTILINGFSKLYAMTGWRIGYVISNDEIIEAILKLQQNLFISAPTISQYAALKAFEKETEREINSMIKEFDRRRRLVLKYVKDFGWEVNNPIGAYYVFPNIGEDGREFAYKLLKEKFVALTPGIGFGSKGKNYIRISYANSYENIKEGLERIKEFLNK.

Lysine 222 bears the N6-(pyridoxal phosphate)lysine mark.

This sequence belongs to the class-I pyridoxal-phosphate-dependent aminotransferase family. Homodimer. Pyridoxal 5'-phosphate serves as cofactor.

It is found in the cytoplasm. The catalysed reaction is 4-(hydroxymethyl)-2-furancarboxaldehyde phosphate + L-alanine = [5-(aminomethyl)-3-furyl]methyl phosphate + pyruvate. The protein operates within cofactor biosynthesis; methanofuran biosynthesis. In terms of biological role, catalyzes the transamination reaction between 4-(hydroxymethyl)-2-furancarboxaldehyde phosphate (4-HFC-P) and alanine to produce pyruvate and 5-(aminomethyl)-3-furanmethanol phosphate (F1-P), the precursor for the furan moiety in methanofuran. This is (5-formylfuran-3-yl)methyl phosphate transaminase from Methanocaldococcus jannaschii (strain ATCC 43067 / DSM 2661 / JAL-1 / JCM 10045 / NBRC 100440) (Methanococcus jannaschii).